Reading from the N-terminus, the 262-residue chain is Small ribosomal subunit protein eS4x (262 aa).

The S4 RNA-binding domain maps to 42–104; sequence LPLVLIIRNR…TNENFRLLYD (63 aa).

The protein belongs to the eukaryotic ribosomal protein eS4 family.

The protein localises to the cytoplasm. The protein is Small ribosomal subunit protein eS4x (RPS4D) of Arabidopsis thaliana (Mouse-ear cress).